The following is a 367-amino-acid chain: Molybdopterin synthase catalytic subunit (367 aa).

Substrate contacts are provided by residues 101–102, lysine 117, and 124–126; these read HR and KKE. Positions 326–345 are disordered; the sequence is HFTKREPSSMEAAPPKKIRK.

The protein belongs to the MoaE family. MOCS2B subfamily. As to quaternary structure, heterotetramer; composed of 2 small (Mocs2A) and 2 large (Mocs2B) subunits.

The protein localises to the cytoplasm. It catalyses the reaction 2 [molybdopterin-synthase sulfur-carrier protein]-C-terminal-Gly-aminoethanethioate + cyclic pyranopterin phosphate + H2O = molybdopterin + 2 [molybdopterin-synthase sulfur-carrier protein]-C-terminal Gly-Gly + 2 H(+). The protein operates within cofactor biosynthesis; molybdopterin biosynthesis. In terms of biological role, catalytic subunit of the molybdopterin synthase complex, a complex that catalyzes the conversion of precursor Z into molybdopterin. Acts by mediating the incorporation of 2 sulfur atoms from thiocarboxylated Mocs2A into precursor Z to generate a dithiolene group. The polypeptide is Molybdopterin synthase catalytic subunit (Drosophila sechellia (Fruit fly)).